We begin with the raw amino-acid sequence, 388 residues long: Succinate--CoA ligase [ADP-forming] subunit beta (388 aa).

ATP contacts are provided by residues lysine 46, 53 to 55 (GRG), glutamate 99, cysteine 102, and glutamate 107. Mg(2+) is bound by residues asparagine 199 and aspartate 213. Residues asparagine 264 and 321 to 323 (GIV) contribute to the substrate site.

It belongs to the succinate/malate CoA ligase beta subunit family. As to quaternary structure, heterotetramer of two alpha and two beta subunits. The cofactor is Mg(2+).

The enzyme catalyses succinate + ATP + CoA = succinyl-CoA + ADP + phosphate. It carries out the reaction GTP + succinate + CoA = succinyl-CoA + GDP + phosphate. Its pathway is carbohydrate metabolism; tricarboxylic acid cycle; succinate from succinyl-CoA (ligase route): step 1/1. Succinyl-CoA synthetase functions in the citric acid cycle (TCA), coupling the hydrolysis of succinyl-CoA to the synthesis of either ATP or GTP and thus represents the only step of substrate-level phosphorylation in the TCA. The beta subunit provides nucleotide specificity of the enzyme and binds the substrate succinate, while the binding sites for coenzyme A and phosphate are found in the alpha subunit. This Actinobacillus pleuropneumoniae serotype 5b (strain L20) protein is Succinate--CoA ligase [ADP-forming] subunit beta.